The chain runs to 144 residues: MSNLFKEVRKLIYIIVGIAGILGALSRYYLGLNITTFWHHSFPLATLLINLIGCFFLAWLTTYIARLNILPSEVITGIGTGFIGSFTTFSTFSVETVQLINHSEWSIAFLYVSCSILGGLIMSGLGYTLGDFLIKKSLTEGDYS.

Transmembrane regions (helical) follow at residues 11–31 (LIYI…YYLG), 44–64 (LATL…TTYI), 74–94 (VITG…TFSV), and 107–127 (IAFL…GLGY). Na(+) is bound by residues Gly-84 and Thr-87.

This sequence belongs to the fluoride channel Fluc/FEX (TC 1.A.43) family.

It is found in the cell membrane. The catalysed reaction is fluoride(in) = fluoride(out). With respect to regulation, na(+) is not transported, but it plays an essential structural role and its presence is essential for fluoride channel function. In terms of biological role, fluoride-specific ion channel. Important for reducing fluoride concentration in the cell, thus reducing its toxicity. The sequence is that of Fluoride-specific ion channel FluC 1 from Bacillus cereus (strain ATCC 14579 / DSM 31 / CCUG 7414 / JCM 2152 / NBRC 15305 / NCIMB 9373 / NCTC 2599 / NRRL B-3711).